The sequence spans 271 residues: MYVWVQQPTAFLLLGLSLGVTVKLNCVKDTYPSGHKCCRECQPGHGMVSRCDHTRDTVCHPCEPGFYNEAVNYDTCKQCTQCNHRSGSELKQNCTPTEDTVCQCRPGTQPRQDSSHKLGVDCVPCPPGHFSPGSNQACKPWTNCTLSGKQIRHPASNSLDTVCEDRSLLATLLWETQRTTFRPTTVPSTTVWPRTSQLPSTPTLVAPEGPAFAVILGLGLGLLAPLTVLLALYLLRKAWRSPNTPKPCWGNSFRTPIQEEQTDTHFTLAKI.

A signal peptide spans 1 to 19; sequence MYVWVQQPTAFLLLGLSLG. The Extracellular segment spans residues 20-210; that stretch reads VTVKLNCVKD…TPTLVAPEGP (191 aa). TNFR-Cys repeat units follow at residues 25 to 60 and 61 to 102; these read NCVK…TVCH and PCEP…DTVC. Disulfide bonds link Cys-26–Cys-37, Cys-38–Cys-51, Cys-41–Cys-59, Cys-62–Cys-76, Cys-79–Cys-94, Cys-82–Cys-102, Cys-104–Cys-122, and Cys-125–Cys-138. A TNFR-Cys 3; truncated repeat occupies 103 to 123; it reads QCRPGTQPRQDSSHKLGVDCV. The TNFR-Cys 4 repeat unit spans residues 124–164; sequence PCPPGHFSPGSNQACKPWTNCTLSGKQIRHPASNSLDTVCE. An N-linked (GlcNAc...) asparagine glycan is attached at Asn-143. Cysteines 144 and 163 form a disulfide. A helical transmembrane segment spans residues 211-235; sequence AFAVILGLGLGLLAPLTVLLALYLL. The Cytoplasmic portion of the chain corresponds to 236-271; sequence RKAWRSPNTPKPCWGNSFRTPIQEEQTDTHFTLAKI.

In terms of assembly, interacts with TRAF2, TRAF3 and TRAF5. In terms of tissue distribution, activated T-cells.

It localises to the membrane. In terms of biological role, receptor for TNFSF4/OX40L/GP34. Is a costimulatory molecule implicated in long-term T-cell immunity. This is Tumor necrosis factor receptor superfamily member 4 (Tnfrsf4) from Rattus norvegicus (Rat).